A 307-amino-acid polypeptide reads, in one-letter code: MQKFDVKTFQGLILQLQDYWSRQGCTIIQPLDMEVGAGTSHPMTCLRALGPEPIACAYVQPSRRPTDGRYGENPNRLQHYYQFQVIIKPSPDNIQELYLGSLKELGMDPEIHDIRFVEDNWENPTLGAWGLGWEVWLNGMEVTQFTYFQQVGGLECKPVTGEITYGLERLAMYIQGVDSVYDLVWSDGPLGKTTYGDVFHQNEVEQSTYNFEHADVEFLFHCFEQYEKEAQNLLALEKPLPLPAYERILKAAHSFNLLDARKAISVTERQRYILRIRTLTKAVAEAYYASREALGFPMCQRSENKQG.

It belongs to the class-II aminoacyl-tRNA synthetase family. In terms of assembly, tetramer of two alpha and two beta subunits.

It is found in the cytoplasm. It carries out the reaction tRNA(Gly) + glycine + ATP = glycyl-tRNA(Gly) + AMP + diphosphate. This Aeromonas hydrophila subsp. hydrophila (strain ATCC 7966 / DSM 30187 / BCRC 13018 / CCUG 14551 / JCM 1027 / KCTC 2358 / NCIMB 9240 / NCTC 8049) protein is Glycine--tRNA ligase alpha subunit.